The sequence spans 837 residues: Phosphatidylinositol-glycan-specific phospholipase D (837 aa).

The signal sequence occupies residues 1 to 23 (MSAGRLWSSLLLLLPLFCSKSSS). N-linked (GlcNAc...) asparagine glycans are attached at residues asparagine 94, asparagine 267, asparagine 287, asparagine 303, and asparagine 317. 7 FG-GAP repeats span residues 364–425 (SPSA…GLPP), 431–492 (NKEG…GRLS), 494–554 (SPNV…RNDK), 561–619 (EADW…SLGK), 629–689 (QSTI…GATR), 701–767 (ALLS…TLGD), and 785–837 (QYVL…FSSD). Asparagine 477, asparagine 496, asparagine 586, asparagine 599, and asparagine 655 each carry an N-linked (GlcNAc...) asparagine glycan.

It belongs to the GPLD1 family. Monomer. Widely expressed.

It localises to the secreted. It carries out the reaction a 6-(alpha-D-glucosaminyl)-1-(1,2-diacyl-sn-glycero-3-phospho)-1D-myo-inositol + H2O = 6-(alpha-D-glucosaminyl)-1D-myo-inositol + a 1,2-diacyl-sn-glycero-3-phosphate + H(+). Its function is as follows. This protein hydrolyzes the inositol phosphate linkage in proteins anchored by phosphatidylinositol glycans (GPI-anchor) thus releasing these proteins from the membrane. This is Phosphatidylinositol-glycan-specific phospholipase D (Gpld1) from Mus musculus (Mouse).